A 574-amino-acid chain; its full sequence is uncharacterized protein (574 aa).

This is an uncharacterized protein from Homo sapiens (Human).